The sequence spans 740 residues: Protein SMY2 (740 aa).

Residues serine 12 and serine 96 each carry the phosphoserine modification. Residue threonine 129 is modified to Phosphothreonine. Residues 205 to 261 form the GYF domain; that stretch reads ESSWRYIDTQGQIHGPFTTQMMSQWYIGGYFASTLQISRLGSTPETLGINDIFITLG. At threonine 311 the chain carries Phosphothreonine. Disordered stretches follow at residues 346–510, 523–548, and 567–592; these read ISQT…KEEL, PSNQ…SPLK, and QSSS…VTSK. Basic and acidic residues predominate over residues 364–439; the sequence is EKGKKEKSES…KKSEKTKKDT (76 aa). Positions 369-440 form a coiled coil; the sequence is EKSESVAKAL…KSEKTKKDTQ (72 aa). Positions 452–467 are enriched in low complexity; the sequence is LPSLNSSSANPAPWAS. Residues 474–486 are compositionally biased toward polar residues; the sequence is AIETSIKNGVSST. The span at 500–510 shows a compositional bias: basic and acidic residues; that stretch reads NSKEEKQKEEL. Polar residues predominate over residues 523–536; that stretch reads PSNQTIDIKSQFQK. Position 545 is a phosphoserine (serine 545). Residue serine 602 is modified to Phosphoserine.

This sequence belongs to the SMY2/mpd2 family. Interacts with EAP1 and MSL5 (via the GYP domain).

Its subcellular location is the cytoplasm. Functionally, suppressor of the MYO2 gene. The chain is Protein SMY2 (SMY2) from Saccharomyces cerevisiae (strain ATCC 204508 / S288c) (Baker's yeast).